The primary structure comprises 1399 residues: DNA-directed RNA polymerase subunit beta' (1399 aa).

Residues Cys70, Cys72, Cys85, and Cys88 each contribute to the Zn(2+) site. 3 residues coordinate Mg(2+): Asp460, Asp462, and Asp464. Positions 814, 888, 895, and 898 each coordinate Zn(2+). The interval 1367 to 1399 (SERKRQRDLGKPQRVSASEAEAALTEALNSSGN) is disordered. Low complexity predominate over residues 1382-1399 (SASEAEAALTEALNSSGN).

The protein belongs to the RNA polymerase beta' chain family. In terms of assembly, the RNAP catalytic core consists of 2 alpha, 1 beta, 1 beta' and 1 omega subunit. When a sigma factor is associated with the core the holoenzyme is formed, which can initiate transcription. Requires Mg(2+) as cofactor. Zn(2+) is required as a cofactor.

The enzyme catalyses RNA(n) + a ribonucleoside 5'-triphosphate = RNA(n+1) + diphosphate. In terms of biological role, DNA-dependent RNA polymerase catalyzes the transcription of DNA into RNA using the four ribonucleoside triphosphates as substrates. The protein is DNA-directed RNA polymerase subunit beta' of Pseudomonas paraeruginosa (strain DSM 24068 / PA7) (Pseudomonas aeruginosa (strain PA7)).